The primary structure comprises 672 residues: DNA ligase (672 aa).

NAD(+)-binding positions include D32–D36, S81–L82, and E114. The active-site N6-AMP-lysine intermediate is K116. Positions 137, 174, 291, and 315 each coordinate NAD(+). Zn(2+) contacts are provided by C409, C412, C427, and C433. The BRCT domain occupies V592–S672.

Belongs to the NAD-dependent DNA ligase family. LigA subfamily. Mg(2+) serves as cofactor. The cofactor is Mn(2+).

It carries out the reaction NAD(+) + (deoxyribonucleotide)n-3'-hydroxyl + 5'-phospho-(deoxyribonucleotide)m = (deoxyribonucleotide)n+m + AMP + beta-nicotinamide D-nucleotide.. DNA ligase that catalyzes the formation of phosphodiester linkages between 5'-phosphoryl and 3'-hydroxyl groups in double-stranded DNA using NAD as a coenzyme and as the energy source for the reaction. It is essential for DNA replication and repair of damaged DNA. The polypeptide is DNA ligase (Actinobacillus succinogenes (strain ATCC 55618 / DSM 22257 / CCUG 43843 / 130Z)).